The sequence spans 307 residues: Probable RuBisCO transcriptional regulator (307 aa).

The HTH lysR-type domain occupies 4–61 (FTLQQLRILKAVATEKNFTKAAELLYLSQPSLSKQIKTLEKNLDILLVNRENNKISLT). Positions 21 to 40 (FTKAAELLYLSQPSLSKQIK) form a DNA-binding region, H-T-H motif.

This sequence belongs to the LysR transcriptional regulatory family.

It is found in the plastid. It localises to the chloroplast. Functionally, trans-acting transcriptional regulator of RuBisCO genes (rbcL and rbcS) expression. The sequence is that of Probable RuBisCO transcriptional regulator (rbcR) from Phaeodactylum tricornutum (strain CCAP 1055/1).